A 365-amino-acid chain; its full sequence is Phosphatidylcholine:ceramide cholinephosphotransferase 2 (365 aa).

Residues Met-1–Glu-14 show a composition bias toward basic and acidic residues. The interval Met-1–Gly-52 is disordered. Residues Asn-15–Arg-26 show a composition bias toward polar residues. 5 helical membrane-spanning segments follow: residues Gly-80 to Val-100, Phe-128 to Phe-148, Phe-159 to Leu-179, His-218 to Ile-240, and Phe-248 to Val-268. The active site involves His-229. Active-site residues include His-272 and Asp-276. A helical membrane pass occupies residues Tyr-273–Trp-290. Over Tyr-291 to Thr-365 the chain is Cytoplasmic. 4 S-palmitoyl cysteine lipidation sites follow: Cys-331, Cys-332, Cys-343, and Cys-348.

It belongs to the sphingomyelin synthase family. Palmitoylated on Cys-331, Cys-332, Cys-343 and Cys-348; which plays an important role in plasma membrane localization.

The protein resides in the cell membrane. It is found in the golgi apparatus membrane. It carries out the reaction an N-acylsphing-4-enine + a 1,2-diacyl-sn-glycero-3-phosphocholine = a sphingomyelin + a 1,2-diacyl-sn-glycerol. The enzyme catalyses an N-acylsphinganine + a 1,2-diacyl-sn-glycero-3-phosphocholine = an N-acylsphinganine-1-phosphocholine + a 1,2-diacyl-sn-glycerol. It catalyses the reaction an N-acyl-(4R)-4-hydroxysphinganine + a 1,2-diacyl-sn-glycero-3-phosphocholine = an N-acyl-(4R)-4-hydroxysphinganine-phosphocholine + a 1,2-diacyl-sn-glycerol. The catalysed reaction is an N-acylsphing-4-enine + a 1,2-diacyl-sn-glycero-3-phosphoethanolamine = an N-acylsphing-4-enine 1-phosphoethanolamine + a 1,2-diacyl-sn-glycerol. It carries out the reaction an N-acylsphinganine + a 1,2-diacyl-sn-glycero-3-phosphoethanolamine = an N-acylsphinganine-1-phosphoethanolamine + a 1,2-diacyl-sn-glycerol. The enzyme catalyses an N-acyl-(4R)-4-hydroxysphinganine + a 1,2-diacyl-sn-glycero-3-phosphoethanolamine = an N-acyl-(4R)-4-hydroxysphinganine-1-phosphoethanolamine + a 1,2-diacyl-sn-glycerol. It catalyses the reaction 1,2-dihexadecanoyl-sn-glycero-3-phosphocholine + an N-acylsphing-4-enine = 1,2-dihexadecanoyl-sn-glycerol + a sphingomyelin. The catalysed reaction is 1-(9Z-octadecenoyl)-2-acyl-sn-3-glycerol + a sphingomyelin = a 1-(9Z-octadecenoyl)-2-acyl-sn-glycero-3-phosphocholine + an N-acylsphing-4-enine. It carries out the reaction N-hexadecanoylsphinganine + a 1,2-diacyl-sn-glycero-3-phosphocholine = N-hexadecanoyl-sphinganine-1-phosphocholine + a 1,2-diacyl-sn-glycerol. The enzyme catalyses N-hexadecanoyl-(4R)-hydroxysphinganine + a 1,2-diacyl-sn-glycero-3-phosphocholine = N-hexadecanoyl-(4R)-hydroxysphinganine-phosphocholine + a 1,2-diacyl-sn-glycerol. It catalyses the reaction N-hexadecanoylsphinganine + a 1,2-diacyl-sn-glycero-3-phosphoethanolamine = N-hexadecanoyl-sphinganine-1-phosphoethanolamine + a 1,2-diacyl-sn-glycerol. The catalysed reaction is N-hexadecanoyl-(4R)-hydroxysphinganine + a 1,2-diacyl-sn-glycero-3-phosphoethanolamine = N-hexadecanoyl-(4R)-hydroxysphinganine-1-phosphoethanolamine + a 1,2-diacyl-sn-glycerol. Its pathway is sphingolipid metabolism. Functionally, sphingomyelin synthase that primarily contributes to sphingomyelin synthesis and homeostasis at the plasma membrane. Catalyzes the reversible transfer of phosphocholine moiety in sphingomyelin biosynthesis: in the forward reaction transfers phosphocholine head group of phosphatidylcholine (PC) on to ceramide (CER) to form ceramide phosphocholine (sphingomyelin, SM) and diacylglycerol (DAG) as by-product, and in the reverse reaction transfers phosphocholine from SM to DAG to form PC and CER. The direction of the reaction appears to depend on the levels of CER and DAG in the plasma membrane. Does not use free phosphorylcholine or CDP-choline as donors. Can also transfer phosphoethanolamine head group of phosphatidylethanolamine (PE) on to ceramide (CER) to form ceramide phosphoethanolamine (CPE). Regulates receptor-mediated signal transduction via mitogenic DAG and proapoptotic CER, as well as via SM, a structural component of membrane rafts that serve as platforms for signal transduction and protein sorting. To a lesser extent, plays a role in secretory transport via regulation of DAG pool at the Golgi apparatus and its downstream effects on PRKD1. Required for normal bone matrix mineralization. This is Phosphatidylcholine:ceramide cholinephosphotransferase 2 (SGMS2) from Macaca fascicularis (Crab-eating macaque).